Consider the following 445-residue polypeptide: tRNA-2-methylthio-N(6)-dimethylallyladenosine synthase (445 aa).

One can recognise an MTTase N-terminal domain in the interval 9 to 125 (LKYRILTYGC…LPYLIARAKE (117 aa)). Residues cysteine 18, cysteine 54, cysteine 88, cysteine 162, cysteine 166, and cysteine 169 each contribute to the [4Fe-4S] cluster site. Residues 148-378 (RKPGLSAFVN…NRRQYQIATE (231 aa)) enclose the Radical SAM core domain. Residues 381 to 444 (QELQGSIQEV…TFSLFGEIFN (64 aa)) form the TRAM domain.

It belongs to the methylthiotransferase family. MiaB subfamily. As to quaternary structure, monomer. The cofactor is [4Fe-4S] cluster.

The protein localises to the cytoplasm. It carries out the reaction N(6)-dimethylallyladenosine(37) in tRNA + (sulfur carrier)-SH + AH2 + 2 S-adenosyl-L-methionine = 2-methylsulfanyl-N(6)-dimethylallyladenosine(37) in tRNA + (sulfur carrier)-H + 5'-deoxyadenosine + L-methionine + A + S-adenosyl-L-homocysteine + 2 H(+). In terms of biological role, catalyzes the methylthiolation of N6-(dimethylallyl)adenosine (i(6)A), leading to the formation of 2-methylthio-N6-(dimethylallyl)adenosine (ms(2)i(6)A) at position 37 in tRNAs that read codons beginning with uridine. In Syntrophomonas wolfei subsp. wolfei (strain DSM 2245B / Goettingen), this protein is tRNA-2-methylthio-N(6)-dimethylallyladenosine synthase.